The following is a 1876-amino-acid chain: 1,3-beta-glucan synthase component FKS1 (1876 aa).

Composition is skewed to polar residues over residues 1–25 (MNTD…QSQE) and 60–71 (QPPNESYDQDYT). The interval 1–108 (MNTDQQPYQG…PGTPGYDSYG (108 aa)) is disordered. Residues 1–454 (MNTDQQPYQG…WLHLVTNFNR (454 aa)) are Cytoplasmic-facing. A Glycyl lysine isopeptide (Lys-Gly) (interchain with G-Cter in ubiquitin) cross-link involves residue lysine 259. Phosphothreonine is present on residues threonine 269 and threonine 272. Glycyl lysine isopeptide (Lys-Gly) (interchain with G-Cter in ubiquitin) cross-links involve residues lysine 275 and lysine 386. Residues 455 to 475 (IWVMHISIFWMYFAYNSPTFY) form a helical membrane-spanning segment. Topologically, residues 476–492 (THNYQQLVDNQPLAAYK) are extracellular. A helical transmembrane segment spans residues 493–513 (WASCALGGTVASLIQIVATLC). The Cytoplasmic portion of the chain corresponds to 514–531 (EWSFVPRKWAGAQHLSRR). Residues 532-552 (FWFLCIIFGINLGPIIFVFAY) traverse the membrane as a helical segment. Residues 553–563 (DKDTVYSTAAH) lie on the Extracellular side of the membrane. The helical transmembrane segment at 564–584 (VVAAVMFFVAVATIIFFSIMP) threads the bilayer. Residues 585-621 (LGGLFTSYMKKSTRRYVASQTFTAAFAPLHGLDRWMS) are Cytoplasmic-facing. A helical transmembrane segment spans residues 622 to 642 (YLVWVTVFAAKYSESYYFLVL). Residues 643 to 678 (SLRDPIRILSTTAMRCTGEYWWGAVLCKVQPKIVLG) lie on the Extracellular side of the membrane. A helical membrane pass occupies residues 679-699 (LVIATDFILFFLDTYLWYIIV). The Cytoplasmic portion of the chain corresponds to 700 to 1358 (NTIFSVGKSF…QPAVDWVRRY (659 aa)). Glycyl lysine isopeptide (Lys-Gly) (interchain with G-Cter in ubiquitin) cross-links involve residues lysine 910 and lysine 915. Residues 1359–1379 (TLSIFIVFWIAFVPIVVQELI) traverse the membrane as a helical segment. Residues 1380-1444 (ERGLWKATQR…RIPFSILYSR (65 aa)) lie on the Extracellular side of the membrane. A helical transmembrane segment spans residues 1445–1465 (FAGSAIYMGARSMLMLLFGTV). Over 1466-1469 (AHWQ) the chain is Cytoplasmic. A helical transmembrane segment spans residues 1470–1490 (APLLWFWASLSSLIFAPFVFN). Residues 1491 to 1560 (PHQFAWEDFF…DASRAHRTNL (70 aa)) are Extracellular-facing. Glycyl lysine isopeptide (Lys-Gly) (interchain with G-Cter in ubiquitin) cross-links involve residues lysine 1539 and lysine 1547. A helical membrane pass occupies residues 1561-1581 (IMAEIIPCAIYAAGCFIAFTF). Over 1582–1601 (INAQTGVKTTDDDRVNSVLR) the chain is Cytoplasmic. The chain crosses the membrane as a helical span at residues 1602–1622 (IIICTLAPIAVNLGVLFFCMG). The Extracellular segment spans residues 1623 to 1643 (MSCCSGPLFGMCCKKTGSVMA). A helical membrane pass occupies residues 1644-1664 (GIAHGVAVIVHIAFFIVMWVL). The Cytoplasmic segment spans residues 1665 to 1672 (ESFNFVRM). Residues 1673–1695 (LIGVVTCIQCQRLIFHCMTALML) form a helical membrane-spanning segment. Residues 1696-1802 (TREFKNDHAN…RKRMVKKYCS (107 aa)) are Extracellular-facing. Residues 1803 to 1823 (LYFLVLAIFAGCIIGPAVASA) traverse the membrane as a helical segment. Over 1824–1876 (KIHKHIGDSLDGVVHNLFQPINTTNNDTGSQMSTYQSHYYTHTPSLKTWSTIK) the chain is Cytoplasmic.

It belongs to the glycosyltransferase 48 family. Component of the 1,3-beta-glucan synthase (GS) complex, composed of two alternate catalytic subunits FKS1 or GSC2, and a regulatory subunit RHO1. Interacts with RHO1, which is a GTP-binding protein.

The protein localises to the mitochondrion. It localises to the cell membrane. The enzyme catalyses [(1-&gt;3)-beta-D-glucosyl](n) + UDP-alpha-D-glucose = [(1-&gt;3)-beta-D-glucosyl](n+1) + UDP + H(+). Alternate catalytic subunit of the 1,3-beta-glucan synthase (GS) complex. Synthesizes 1,3-beta-glucan, a major structural component of the yeast cell wall. Involved in cell wall synthesis, maintenance and remodeling. This is 1,3-beta-glucan synthase component FKS1 (FKS1) from Saccharomyces cerevisiae (strain ATCC 204508 / S288c) (Baker's yeast).